A 522-amino-acid chain; its full sequence is Protein nucleotidyltransferase YdiU (522 aa).

ATP-binding residues include Gly-109, Gly-111, Arg-112, Lys-132, Asp-144, Gly-145, Arg-195, and Arg-202. Catalysis depends on Asp-271, which acts as the Proton acceptor. The Mg(2+) site is built by Asn-272 and Asp-281. ATP is bound at residue Asp-281.

This sequence belongs to the SELO family. The cofactor is Mg(2+). Requires Mn(2+) as cofactor.

It carries out the reaction L-seryl-[protein] + ATP = 3-O-(5'-adenylyl)-L-seryl-[protein] + diphosphate. The catalysed reaction is L-threonyl-[protein] + ATP = 3-O-(5'-adenylyl)-L-threonyl-[protein] + diphosphate. The enzyme catalyses L-tyrosyl-[protein] + ATP = O-(5'-adenylyl)-L-tyrosyl-[protein] + diphosphate. It catalyses the reaction L-histidyl-[protein] + UTP = N(tele)-(5'-uridylyl)-L-histidyl-[protein] + diphosphate. It carries out the reaction L-seryl-[protein] + UTP = O-(5'-uridylyl)-L-seryl-[protein] + diphosphate. The catalysed reaction is L-tyrosyl-[protein] + UTP = O-(5'-uridylyl)-L-tyrosyl-[protein] + diphosphate. In terms of biological role, nucleotidyltransferase involved in the post-translational modification of proteins. It can catalyze the addition of adenosine monophosphate (AMP) or uridine monophosphate (UMP) to a protein, resulting in modifications known as AMPylation and UMPylation. This Burkholderia vietnamiensis (strain G4 / LMG 22486) (Burkholderia cepacia (strain R1808)) protein is Protein nucleotidyltransferase YdiU.